The chain runs to 490 residues: UDP-glycosyltransferase 73C7 (490 aa).

UDP-alpha-D-glucose is bound by residues serine 291, 351–353, 368–376, and 390–393; these read APQ, HCGWNSTLE, and FAEQ.

The protein belongs to the UDP-glycosyltransferase family.

This chain is UDP-glycosyltransferase 73C7 (UGT73C7), found in Arabidopsis thaliana (Mouse-ear cress).